Reading from the N-terminus, the 872-residue chain is Extended synaptotagmin-2-A (872 aa).

The tract at residues methionine 1 to proline 25 is disordered. At methionine 1–glycine 31 the chain is on the cytoplasmic side. Residues methionine 32–phenylalanine 52 traverse the membrane as a helical segment. Residues proline 53 to tyrosine 55 lie on the Lumenal side of the membrane. The chain crosses the membrane as a helical span at residues valine 56 to tryptophan 76. The Cytoplasmic portion of the chain corresponds to tryptophan 77–serine 872. An SMP-LTD domain is found at aspartate 119 to valine 298. C2 domains follow at residues leucine 297–phenylalanine 417 and asparagine 442–asparagine 588. Positions 328, 329, 341, 388, 389, 390, 392, 394, and 395 each coordinate Ca(2+). A compositionally biased stretch (basic and acidic residues) spans lysine 608–histidine 617. Residues lysine 608–isoleucine 711 are disordered. A compositionally biased stretch (pro residues) spans proline 632–proline 652. Positions asparagine 664 to glutamine 681 are enriched in polar residues. Residues serine 682–serine 696 are compositionally biased toward low complexity. The region spanning proline 737–tyrosine 859 is the C2 3 domain. The interval lysine 784–lysine 791 is required for phosphatidylinositol 4,5-bisphosphate-dependent location at the cell membrane.

The protein belongs to the extended synaptotagmin family. As to quaternary structure, interacts with fgfr1 that has been activated by fgf1 binding. Interacts (via C2 domains) with the AP-2 complex (via an alpha subunit). Identified in a complex with the AP-2 complex and fgfr1.

It localises to the cell membrane. Its subcellular location is the endoplasmic reticulum membrane. Functionally, tethers the endoplasmic reticulum to the cell membrane and promotes the formation of appositions between the endoplasmic reticulum and the cell membrane. Binds glycerophospholipids in a barrel-like domain and may play a role in cellular lipid transport. Plays a role in the rapid internalization of fgfr1 that has been activated by fgf1 binding; this occurs most likely via the AP-2 complex. Required for normal fgf signaling and the activation of downstream signaling cascades via its role in the internalization of activated fgfr1. Required for normal embryonic development via its role in fgf signaling and the downstream regulation of t/xBRA expression. The polypeptide is Extended synaptotagmin-2-A (esyt2-a) (Xenopus laevis (African clawed frog)).